The sequence spans 68 residues: uncharacterized protein (68 aa).

It to B.subtilis XtrA.

This is an uncharacterized protein from Bacillus subtilis (strain 168).